The chain runs to 230 residues: Cytidylate kinase (230 aa).

Residue 12-20 (GPSGAGKGT) coordinates ATP.

This sequence belongs to the cytidylate kinase family. Type 1 subfamily.

The protein resides in the cytoplasm. The enzyme catalyses CMP + ATP = CDP + ADP. It carries out the reaction dCMP + ATP = dCDP + ADP. In Aeromonas salmonicida (strain A449), this protein is Cytidylate kinase.